Consider the following 499-residue polypeptide: Alpha-amylase B (499 aa).

An N-terminal signal peptide occupies residues 1 to 21 (MMVAWWSLFLYGLQVAAPALA). An intrachain disulfide couples cysteine 51 to cysteine 59. Glutamine 56 and tryptophan 104 together coordinate substrate. Asparagine 142 serves as a coordination point for Ca(2+). Substrate is bound at residue histidine 143. A disulfide bridge links cysteine 171 with cysteine 185. Positions 183 and 196 each coordinate Ca(2+). Asparagine 218 carries an N-linked (GlcNAc...) asparagine glycan. Arginine 225 provides a ligand contact to substrate. Ca(2+)-binding residues include aspartate 227, histidine 231, and glutamate 251. Catalysis depends on aspartate 227, which acts as the Nucleophile. A substrate-binding site is contributed by 230 to 231 (KH). The Proton donor role is filled by glutamate 251. Glycine 255 lines the substrate pocket. Cysteines 261 and 304 form a disulfide. Substrate is bound by residues aspartate 318 and arginine 365. An intrachain disulfide couples cysteine 461 to cysteine 496.

The protein belongs to the glycosyl hydrolase 13 family. Ca(2+) serves as cofactor.

The catalysed reaction is Endohydrolysis of (1-&gt;4)-alpha-D-glucosidic linkages in polysaccharides containing three or more (1-&gt;4)-alpha-linked D-glucose units.. This is Alpha-amylase B (amyB) from Aspergillus awamori (Black koji mold).